Reading from the N-terminus, the 828-residue chain is Molybdenum cofactor sulfurase (828 aa).

Position 239 is an N6-(pyridoxal phosphate)lysine (lysine 239). Residue cysteine 402 is part of the active site. A disordered region spans residues 638-682 (TRYTRRSLHSRSSTAALRRQRPVEESSMPGSFPSDTPLSRTPEPP). The MOSC domain occupies 652 to 825 (AALRRQRPVE…VMVGDVVRPW (174 aa)).

Belongs to the class-V pyridoxal-phosphate-dependent aminotransferase family. MOCOS subfamily. Pyridoxal 5'-phosphate is required as a cofactor.

It catalyses the reaction Mo-molybdopterin + L-cysteine + AH2 = thio-Mo-molybdopterin + L-alanine + A + H2O. In terms of biological role, sulfurates the molybdenum cofactor. Sulfation of molybdenum is essential for xanthine dehydrogenase (XDH) and aldehyde oxidase (ADO) enzymes in which molybdenum cofactor is liganded by 1 oxygen and 1 sulfur atom in active form. In Aspergillus terreus (strain NIH 2624 / FGSC A1156), this protein is Molybdenum cofactor sulfurase.